A 395-amino-acid polypeptide reads, in one-letter code: NAD(P)H-quinone oxidoreductase subunit H (395 aa).

The protein belongs to the complex I 49 kDa subunit family. NDH-1 can be composed of about 15 different subunits; different subcomplexes with different compositions have been identified which probably have different functions.

It localises to the cellular thylakoid membrane. It catalyses the reaction a plastoquinone + NADH + (n+1) H(+)(in) = a plastoquinol + NAD(+) + n H(+)(out). The enzyme catalyses a plastoquinone + NADPH + (n+1) H(+)(in) = a plastoquinol + NADP(+) + n H(+)(out). Its function is as follows. NDH-1 shuttles electrons from an unknown electron donor, via FMN and iron-sulfur (Fe-S) centers, to quinones in the respiratory and/or the photosynthetic chain. The immediate electron acceptor for the enzyme in this species is believed to be plastoquinone. Couples the redox reaction to proton translocation, and thus conserves the redox energy in a proton gradient. Cyanobacterial NDH-1 also plays a role in inorganic carbon-concentration. The polypeptide is NAD(P)H-quinone oxidoreductase subunit H (Prochlorococcus marinus (strain MIT 9301)).